Here is a 584-residue protein sequence, read N- to C-terminus: MSAKSFEVTDPVNSSLKGFALANPSITLVPEEKILFRKTDSDKIALISGGGSGHEPTHAGFIGKGMLSGAVVGEIFASPSTKQILNAIRLVNENASGVLLIVKNYTGDVLHFGLSAERARALGINCRVAVIGDDVAVGREKGGMVGRRALAGTVLVHKIVGAFAEEYSSKYGLDGTAKVAKIINDNLVTIGSSLDHCKVPGRKFESELNEKQMELGMGIHNEPGVKVLDPIPSTEDLISKYMLPKLLDPNDKDRAFVKFDEDDEVVLLVNNLGGVSNFVISSITSKTTDFLKENYNITPVQTIAGTLMTSFNGNGFSITLLNATKATKALQSDFEEIKSVLDLLNAFTNAPGWPIADFEKTSAPSVNDDLLHNEVTAKAVGTYDFDKFAEWMKSGAEQVIKSEPHITELDNQVGDGDCGYTLVAGVKGITENLDKLSKDSLSQAVAQISDFIEGSMGGTSGGLYSILLSGFSHGLIQVCKSKDEPVTKEIVAKSLGIALDTLYKYTKARKGSSTMIDALEPFVKEFTASKDFNKAVKAAEEGAKSTATFEAKFGRASYVGDSSQVEDPGAVGLCEFLKGVQSAL.

Ser2 carries the N-acetylserine modification. Phosphoserine is present on residues Ser2 and Ser5. Positions 7–353 (EVTDPVNSSL…LNAFTNAPGW (347 aa)) constitute a DhaK domain. Residues 51–54 (GSGH), Lys103, and Asp108 contribute to the substrate site. Residue His220 is the Tele-hemiaminal-histidine intermediate of the active site. At Ser365 the chain carries Phosphoserine. The region spanning 386-582 (DKFAEWMKSG…LCEFLKGVQS (197 aa)) is the DhaL domain. ATP contacts are provided by residues 415 to 418 (DGDC) and 459 to 460 (TS). Position 512 is a phosphoserine (Ser512). Residues 514 to 515 (TM) and 567 to 569 (DPG) each bind ATP.

It belongs to the dihydroxyacetone kinase (DAK) family.

The catalysed reaction is dihydroxyacetone + ATP = dihydroxyacetone phosphate + ADP + H(+). The enzyme catalyses D-glyceraldehyde + ATP = D-glyceraldehyde 3-phosphate + ADP + H(+). It participates in polyol metabolism; glycerol fermentation; glycerone phosphate from glycerol (oxidative route): step 2/2. Its function is as follows. Catalyzes both the phosphorylation of dihydroxyacetone and of glyceraldehyde. This chain is Dihydroxyacetone kinase 1 (DAK1), found in Saccharomyces cerevisiae (strain ATCC 204508 / S288c) (Baker's yeast).